Reading from the N-terminus, the 517-residue chain is GMP synthase [glutamine-hydrolyzing] (517 aa).

The region spanning 11–202 (KIIVLDFGSQ…AFDVCGAKDN (192 aa)) is the Glutamine amidotransferase type-1 domain. Cys88 serves as the catalytic Nucleophile. Residues His176 and Glu178 contribute to the active site. Residues 203–392 (WTMDDFIKLS…LGLPHDLVWR (190 aa)) enclose the GMPS ATP-PPase domain. Residue 230–236 (SGGVDSS) coordinates ATP.

As to quaternary structure, homodimer.

The enzyme catalyses XMP + L-glutamine + ATP + H2O = GMP + L-glutamate + AMP + diphosphate + 2 H(+). It functions in the pathway purine metabolism; GMP biosynthesis; GMP from XMP (L-Gln route): step 1/1. Functionally, catalyzes the synthesis of GMP from XMP. The sequence is that of GMP synthase [glutamine-hydrolyzing] from Lactobacillus delbrueckii subsp. bulgaricus (strain ATCC 11842 / DSM 20081 / BCRC 10696 / JCM 1002 / NBRC 13953 / NCIMB 11778 / NCTC 12712 / WDCM 00102 / Lb 14).